The following is a 172-amino-acid chain: MRNLILVGPMGAGKSTIGRLLAKELRLPFKDSDKEIELRTGANIPWIFDKEGEPGFREREQAMIAELCEADGVVLATGGGAVMRTENRQALRAGGRVVYLHASIEQQVGRTARDRNRPLLRTADPARVLSELLAIRDPLYREIADVVIETDERPPRMVVLEILARLAELPPR.

11–16 is an ATP binding site; sequence GAGKST. Mg(2+) is bound at residue Ser-15. Substrate contacts are provided by Asp-33, Arg-57, and Gly-79. An ATP-binding site is contributed by Arg-117. Residue Arg-136 participates in substrate binding. Arg-153 provides a ligand contact to ATP.

Belongs to the shikimate kinase family. In terms of assembly, monomer. It depends on Mg(2+) as a cofactor.

The protein localises to the cytoplasm. The catalysed reaction is shikimate + ATP = 3-phosphoshikimate + ADP + H(+). Its pathway is metabolic intermediate biosynthesis; chorismate biosynthesis; chorismate from D-erythrose 4-phosphate and phosphoenolpyruvate: step 5/7. Functionally, catalyzes the specific phosphorylation of the 3-hydroxyl group of shikimic acid using ATP as a cosubstrate. The sequence is that of Shikimate kinase from Pseudomonas syringae pv. tomato (strain ATCC BAA-871 / DC3000).